A 238-amino-acid chain; its full sequence is Opacity protein opA66 (238 aa).

Ala1 is a signal peptide. Disordered stretches follow at residues 88 to 109 (NLQR…QENG) and 162 to 183 (GARG…AHQE). Over residues 168–183 (PTVSSPYKNTQDAHQE) the composition is skewed to polar residues.

This sequence belongs to the opacity porin family.

It is found in the cell outer membrane. Functionally, implicated in a number of adherence functions. OPA proteins are implicated in pathogenesis and are subject to phase variation. The sequence is that of Opacity protein opA66 from Neisseria gonorrhoeae.